We begin with the raw amino-acid sequence, 2296 residues long: Protein Ycf2 (2296 aa).

Glycine 1650–serine 1657 is a binding site for ATP.

Belongs to the Ycf2 family.

It localises to the plastid. Its subcellular location is the chloroplast stroma. Functionally, probable ATPase of unknown function. Its presence in a non-photosynthetic plant (Epifagus virginiana) and experiments in tobacco indicate that it has an essential function which is probably not related to photosynthesis. The sequence is that of Protein Ycf2 from Arabis hirsuta (Hairy rock-cress).